The chain runs to 335 residues: Anthranilate phosphoribosyltransferase (335 aa).

5-phospho-alpha-D-ribose 1-diphosphate is bound by residues G82, 85–86 (GD), T90, 92–95 (NIST), 110–118 (KHGGRSVSS), and S122. G82 provides a ligand contact to anthranilate. Residue S94 participates in Mg(2+) binding. Position 168 (R168) interacts with anthranilate. Mg(2+) contacts are provided by D226 and E227.

Belongs to the anthranilate phosphoribosyltransferase family. As to quaternary structure, homodimer. Mg(2+) is required as a cofactor.

It carries out the reaction N-(5-phospho-beta-D-ribosyl)anthranilate + diphosphate = 5-phospho-alpha-D-ribose 1-diphosphate + anthranilate. It participates in amino-acid biosynthesis; L-tryptophan biosynthesis; L-tryptophan from chorismate: step 2/5. Its function is as follows. Catalyzes the transfer of the phosphoribosyl group of 5-phosphorylribose-1-pyrophosphate (PRPP) to anthranilate to yield N-(5'-phosphoribosyl)-anthranilate (PRA). The chain is Anthranilate phosphoribosyltransferase from Francisella philomiragia subsp. philomiragia (strain ATCC 25017 / CCUG 19701 / FSC 153 / O#319-036).